The sequence spans 420 residues: UDP-N-acetylmuramoylalanine--D-glutamate ligase (420 aa).

ATP is bound at residue 109–115 (GSVGKST).

It belongs to the MurCDEF family.

It is found in the cytoplasm. It carries out the reaction UDP-N-acetyl-alpha-D-muramoyl-L-alanine + D-glutamate + ATP = UDP-N-acetyl-alpha-D-muramoyl-L-alanyl-D-glutamate + ADP + phosphate + H(+). It functions in the pathway cell wall biogenesis; peptidoglycan biosynthesis. Its function is as follows. Cell wall formation. Catalyzes the addition of glutamate to the nucleotide precursor UDP-N-acetylmuramoyl-L-alanine (UMA). This Fervidobacterium nodosum (strain ATCC 35602 / DSM 5306 / Rt17-B1) protein is UDP-N-acetylmuramoylalanine--D-glutamate ligase.